Consider the following 496-residue polypeptide: Cytochrome P450 71D18 (496 aa).

A helical; Signal-anchor for type II membrane protein membrane pass occupies residues 2-22; the sequence is ELDLLSAIIILVATYIVSLLI. Cysteine 436 is a binding site for heme.

The protein belongs to the cytochrome P450 family. Requires heme as cofactor.

Its subcellular location is the endoplasmic reticulum membrane. It carries out the reaction (4S)-limonene + reduced [NADPH--hemoprotein reductase] + O2 = (1S,5R)-carveol + oxidized [NADPH--hemoprotein reductase] + H2O + H(+). Functionally, hydroxylates (-)-(4S)-limonene to (-)-trans-carveol, a precursor of (-)-carvone. Fluorinated substrate analogs are hydroxylated with the same regio- and stereochemistry. The chain is Cytochrome P450 71D18 (CYP71D18) from Mentha gracilis (Gingermint).